The chain runs to 734 residues: Polyribonucleotide nucleotidyltransferase (734 aa).

Asp503 and Asp509 together coordinate Mg(2+). In terms of domain architecture, KH spans 570 to 629 (PKLSTIQVPVDAIGMIIGKGGETIRSITEETGAQINVDDDGTVTISSPNGESAAAAIETI). Residues 639-713 (GTIYMGKVKD…GKIRYALSIK (75 aa)) enclose the S1 motif domain.

This sequence belongs to the polyribonucleotide nucleotidyltransferase family. Requires Mg(2+) as cofactor.

The protein resides in the cytoplasm. It catalyses the reaction RNA(n+1) + phosphate = RNA(n) + a ribonucleoside 5'-diphosphate. Functionally, involved in mRNA degradation. Catalyzes the phosphorolysis of single-stranded polyribonucleotides processively in the 3'- to 5'-direction. In Chlorobium phaeobacteroides (strain BS1), this protein is Polyribonucleotide nucleotidyltransferase.